Here is a 115-residue protein sequence, read N- to C-terminus: Large ribosomal subunit protein uL22c (115 aa).

The protein belongs to the universal ribosomal protein uL22 family. Part of the 50S ribosomal subunit.

The protein resides in the plastid. It is found in the chloroplast. Functionally, this protein binds specifically to 23S rRNA. In terms of biological role, the globular domain of the protein is located near the polypeptide exit tunnel on the outside of the subunit, while an extended beta-hairpin is found that lines the wall of the exit tunnel in the center of the 70S ribosome. This Thalassiosira pseudonana (Marine diatom) protein is Large ribosomal subunit protein uL22c (rpl22).